Here is a 76-residue protein sequence, read N- to C-terminus: Acyl carrier protein (76 aa).

The Carrier domain occupies 1 to 76 (MSIEERVKKI…SAIDYVQNNQ (76 aa)). S36 is subject to O-(pantetheine 4'-phosphoryl)serine.

Belongs to the acyl carrier protein (ACP) family. 4'-phosphopantetheine is transferred from CoA to a specific serine of apo-ACP by AcpS. This modification is essential for activity because fatty acids are bound in thioester linkage to the sulfhydryl of the prosthetic group.

It is found in the cytoplasm. The protein operates within lipid metabolism; fatty acid biosynthesis. Its function is as follows. Carrier of the growing fatty acid chain in fatty acid biosynthesis. In Actinobacillus succinogenes (strain ATCC 55618 / DSM 22257 / CCUG 43843 / 130Z), this protein is Acyl carrier protein.